A 302-amino-acid chain; its full sequence is RNA polymerase sigma factor RpoH (302 aa).

The segment at 57-126 (LVTSHLRLVA…IQEYILRSWS (70 aa)) is sigma-70 factor domain-2. An Interaction with polymerase core subunit RpoC motif is present at residues 81-84 (ELIS). The interval 235–286 (AMDKLNDREKHILTERRLSDNPKTLEELSQVYGVSRERVRQIEVRAFDKLQK) is sigma-70 factor domain-4. The segment at residues 259-278 (LEELSQVYGVSRERVRQIEV) is a DNA-binding region (H-T-H motif).

Belongs to the sigma-70 factor family. RpoH subfamily. As to quaternary structure, interacts with the RNA polymerase core enzyme.

The protein localises to the cytoplasm. Its function is as follows. Sigma factors are initiation factors that promote the attachment of RNA polymerase to specific initiation sites and are then released. This sigma factor is involved in regulation of expression of heat shock genes. This Zymomonas mobilis subsp. mobilis (strain ATCC 31821 / ZM4 / CP4) protein is RNA polymerase sigma factor RpoH.